The following is a 317-amino-acid chain: MIREKTNKISIIGAGFVGSTTAFALMQDGLASEIVIVDINKDKAHAEAMDLAQGAAFVKSVDIKSGDYADTKDSDIVIITAGVGPKPGETRLDIINKNLKIFQSIVPEVVKYSPNSILLVVSNPVDILTYITYKLSGFPKERVIGSGTVLDTSRLKYMLSEHFDIDARNVHTYIIGEHGDSEITAWSLTNIAGANVEEYCKTVCANCDGSFKKELPEKVKNAAYEIINSKGYTNYAVALAVTRIVEAILRDENAILTVSSLFEGQYGIDNVYLAMPTIVDRSGARQILDVPISNEEKENLIKSAEILKGHIANSELD.

NAD(+)-binding positions include V17, D38, K43, Y68, and 82-83 (GV). Substrate is bound at residue R91. NAD(+)-binding positions include S104, 121–123 (VSN), and S146. A substrate-binding site is contributed by 123 to 126 (NPVD). 151–154 (DTSR) is a binding site for substrate. Positions 156 and 171 each coordinate beta-D-fructose 1,6-bisphosphate. H178 acts as the Proton acceptor in catalysis. Y224 carries the phosphotyrosine modification. Residue T233 coordinates substrate.

The protein belongs to the LDH/MDH superfamily. LDH family. As to quaternary structure, homotetramer.

It is found in the cytoplasm. It carries out the reaction (S)-lactate + NAD(+) = pyruvate + NADH + H(+). It functions in the pathway fermentation; pyruvate fermentation to lactate; (S)-lactate from pyruvate: step 1/1. Allosterically activated by fructose 1,6-bisphosphate (FBP). In terms of biological role, catalyzes the conversion of lactate to pyruvate. This chain is L-lactate dehydrogenase, found in Clostridium perfringens (strain ATCC 13124 / DSM 756 / JCM 1290 / NCIMB 6125 / NCTC 8237 / Type A).